The primary structure comprises 358 residues: Na(+)/H(+) exchange regulatory cofactor NHE-RF1 (358 aa).

At Ser-2 the chain carries N-acetylserine. Phosphoserine is present on residues Ser-2 and Ser-46. A PDZ 1 domain is found at 14–94 (LCCLEKGPNG…AVRLLVVDPE (81 aa)). Residues 114–134 (QETPGQAEPAAAAEAQGAGNE) are compositionally biased toward low complexity. 2 disordered regions span residues 114 to 192 (QETP…EASG) and 269 to 358 (SREA…FSNL). Over residues 135–149 (NEPREADKSHPEQRK) the composition is skewed to basic and acidic residues. The PDZ 2 domain occupies 154–234 (LCTMKKGPSG…ETKLLVVDRE (81 aa)). Ser-162, Ser-269, Ser-280, Ser-290, and Ser-291 each carry phosphoserine. A compositionally biased stretch (polar residues) spans 287–306 (RSASSDTSEELNSQDSPPKQ). The residue at position 293 (Thr-293) is a Phosphothreonine. Phosphoserine is present on residues Ser-294, Ser-299, and Ser-302. Residues 307–319 (DSTAPSSTSSSDP) show a composition bias toward low complexity. The span at 348 to 358 (WSKKNELFSNL) shows a compositional bias: basic and acidic residues.

Homodimer, and heterodimer with NHERF2. Binds the N-termini of EZR, RDX and MSN. Binds the C-termini of PDGFRA, PDGFRB, ADRB2, NOS2 and CFTR. Binds ARHGAP17, EPI64, RACK1, OPRK1, GNAQ, CTNNB1 and PLCB3. Binds PDZK1. Interacts with CLCN3. Binds the C-terminus of PAG1. In resting T-cells, part of a PAG1-NHERF1-MSN complex which is disrupted upon TCR activation. Forms a complex with CFTR and SLC4A7. Forms a complex with SLC4A7 and ATP6V1B1. Interacts with TRPC4 (via the PDZ-binding domain). Directly interacts with HTR4. Interacts (via the PDZ 1 domain) with PODXL (via the C-terminal PDZ-binding motif DTHL); interaction is not detected in glomerular epithelium cells. Interacts (via the PDZ 1 domain) with PODXL (via the C-terminal PDZ-binding motif DTHL); the interaction take place early in the secretory pathway and is necessary for its apical membrane sorting. Interacts with SLC26A3. Interacts with MCC. Interacts with SLC34A1. Interacts (via the PDZ domains) with SLC26A6 isoform 4 and isoform 5. Interacts (via PDZ domains) with ACE2 (via PDZ-binding motif); the interaction may enhance ACE2 membrane residence. In terms of processing, phosphorylated on serine residues.

The protein resides in the cytoplasm. The protein localises to the apical cell membrane. It is found in the endomembrane system. It localises to the cell projection. Its subcellular location is the filopodium. The protein resides in the ruffle. The protein localises to the microvillus. Functionally, scaffold protein that connects plasma membrane proteins with members of the ezrin/moesin/radixin family and thereby helps to link them to the actin cytoskeleton and to regulate their surface expression. Necessary for recycling of internalized ADRB2. Was first known to play a role in the regulation of the activity and subcellular location of SLC9A3. Necessary for cAMP-mediated phosphorylation and inhibition of SLC9A3. Involved in sperm capacitation. May participate in the regulation of the chloride and bicarbonate homeostasis in spermatozoa. May enhance Wnt signaling. May participate in HTR4 targeting to microvilli. Involved in the regulation of phosphate reabsorption in the renal proximal tubules. This Macaca fascicularis (Crab-eating macaque) protein is Na(+)/H(+) exchange regulatory cofactor NHE-RF1 (NHERF1).